We begin with the raw amino-acid sequence, 328 residues long: DNA-directed RNA polymerase subunit alpha (328 aa).

An alpha N-terminal domain (alpha-NTD) region spans residues 1 to 234 (MQTAVNEFLT…QQLAVFVDLE (234 aa)). The alpha C-terminal domain (alpha-CTD) stretch occupies residues 248–328 (IDPILLRPVD…NWPPASLKND (81 aa)).

The protein belongs to the RNA polymerase alpha chain family. Homodimer. The RNAP catalytic core consists of 2 alpha, 1 beta, 1 beta' and 1 omega subunit. When a sigma factor is associated with the core the holoenzyme is formed, which can initiate transcription.

The catalysed reaction is RNA(n) + a ribonucleoside 5'-triphosphate = RNA(n+1) + diphosphate. Its function is as follows. DNA-dependent RNA polymerase catalyzes the transcription of DNA into RNA using the four ribonucleoside triphosphates as substrates. This is DNA-directed RNA polymerase subunit alpha from Cellvibrio japonicus (strain Ueda107) (Pseudomonas fluorescens subsp. cellulosa).